A 428-amino-acid polypeptide reads, in one-letter code: Immunoglobulin superfamily containing leucine-rich repeat protein (428 aa).

The signal sequence occupies residues 1 to 18 (MQELHLLWWALLLGLAQA). The LRRNT domain maps to 19–50 (CPEPCDCGEKYGFQIADCAYRDLEAVPPGFPA). The N-linked (GlcNAc...) asparagine glycan is linked to N51. 5 LRR repeats span residues 51–72 (NVTA…AFRE), 75–96 (LLQS…ALAS), 99–122 (HLKS…HNLS), 123–144 (ALQL…AFRS), and 147–168 (ALRS…TFTP). The 52-residue stretch at 180–231 (NPFDCTCGIVWLKTWALATAVSIPEQDNIACTSPHVLKGTPLSRLPPLPCSA) folds into the LRRCT domain. An Ig-like domain is found at 232–343 (PSVQLSYQPS…GSAESSVDVA (112 aa)). C257 and C327 form a disulfide bridge. The N-linked (GlcNAc...) asparagine glycan is linked to N309.

It localises to the secreted. In Pongo abelii (Sumatran orangutan), this protein is Immunoglobulin superfamily containing leucine-rich repeat protein (ISLR).